The sequence spans 375 residues: MPSVTISSTMLAGLLLMLVPASSAAPRPQAREDVPMRLLQDAKPAFPYDPNTIAKCSWWWDNEGQIPCANMPAEWGITMQDFLRWNPSITSSCGNFLNGRSYCVEASGEEPPVPGTPTTTTAPATTTKPSNGITTPQPIQDGMVGNCNKFHYISEGDRCQDILSYQKITLADFFKWNPAVKSDCSGLWSKTNACVGVVGQAPAVTTTTTKPATPTTPSNGITTPQPIQAGMVGNCNKFHYISEGDRCQDILSYQKITQADFFKWNPAVKSDCSGLWSKTHACVGVIGGQAPPPTPTTTKPTTTKPPGNGVTTPTPTQPGMVTNCNKFHFVSPGNTCQQIVSYQKITMANFVKWNSGAGSGCNNLWGNTHACVGVF.

The signal sequence occupies residues Met1–Ala24. One can recognise a LysM 1 domain in the interval Ser57–Val104. The interval Gly108–Ile139 is disordered. A compositionally biased stretch (low complexity) spans Thr116–Pro129. The LysM 2 domain maps to Lys149 to Val195. Residues Thr206–Pro217 show a composition bias toward low complexity. Residues Thr206 to Gln225 are disordered. The 47-residue stretch at Lys237 to Val283 folds into the LysM 3 domain. Residues Gly287–Gln317 are disordered. Low complexity predominate over residues Thr296 to Gln317. The LysM 4 domain maps to Lys326–Val372.

Belongs to the secreted LysM effector family.

Might have a role in sequestration of chitin oligosaccharides (breakdown products of fungal cell walls that are released during invasion and act as triggers of host immunity) to dampen host defense. Does not play an important role during host colonization. The sequence is that of Secreted LysM effector Vd4LysM from Verticillium dahliae (strain VdLs.17 / ATCC MYA-4575 / FGSC 10137) (Verticillium wilt).